The chain runs to 481 residues: Tetratricopeptide repeat protein 29 (481 aa).

The segment covering 1 to 18 (MASVGPVKTKTVTLKELT) has biased composition (low complexity). The interval 1-53 (MASVGPVKTKTVTLKELTPPIPSPEKSACKGAKPDSNHMALVPVKPSQPGSGK) is disordered. TPR repeat units lie at residues 191-224 (CERC…AMES), 231-264 (QEVR…AMAL), 271-310 (VEAN…SQRV), 317-350 (ADSL…ARAA), 357-390 (KRAS…SEKA), and 397-430 (YRAT…ARKL).

As to quaternary structure, interacts with TAX-1.

It localises to the cytoplasm. It is found in the cytoskeleton. Its subcellular location is the flagellum axoneme. In terms of biological role, axonemal protein which is implicated in axonemal and/or peri-axonemal structure assembly and regulates flagellum assembly and beating. This Trypanosoma brucei brucei (strain 927/4 GUTat10.1) protein is Tetratricopeptide repeat protein 29.